A 240-amino-acid polypeptide reads, in one-letter code: MATLFIADLHLQTEEPAIVAGFLRFLAVEARQADALYILGDLFEAWIGDDDPNPLHREMAVAIKSLVDSGVPCFFIHGNRDFLIGKRFARESGMTLLPQEKVLDLYGRNVLIMHGDTLCTDDAGYQAFRAKVHNPWVQRLFLTLPLFIRRRIAARMRAGSKAANSSKSLDIMDVNAQTVVAEMEKHRVQWLIHGHTHRPAVHELSANDQPAFRVVLGAWHHEGSMVKVTPDNVELIAFPL.

Residues Asp-8, His-10, Asp-41, Asn-79, and His-114 each contribute to the Mn(2+) site. 79–80 (NR) lines the substrate pocket. Substrate is bound by residues Asp-122, Ser-160, Asn-164, Lys-167, and His-195. The Mn(2+) site is built by His-195 and His-197.

Belongs to the LpxH family. Requires Mn(2+) as cofactor.

The protein resides in the cell inner membrane. It catalyses the reaction UDP-2-N,3-O-bis[(3R)-3-hydroxytetradecanoyl]-alpha-D-glucosamine + H2O = 2-N,3-O-bis[(3R)-3-hydroxytetradecanoyl]-alpha-D-glucosaminyl 1-phosphate + UMP + 2 H(+). The protein operates within glycolipid biosynthesis; lipid IV(A) biosynthesis; lipid IV(A) from (3R)-3-hydroxytetradecanoyl-[acyl-carrier-protein] and UDP-N-acetyl-alpha-D-glucosamine: step 4/6. In terms of biological role, hydrolyzes the pyrophosphate bond of UDP-2,3-diacylglucosamine to yield 2,3-diacylglucosamine 1-phosphate (lipid X) and UMP by catalyzing the attack of water at the alpha-P atom. Involved in the biosynthesis of lipid A, a phosphorylated glycolipid that anchors the lipopolysaccharide to the outer membrane of the cell. This Salmonella paratyphi A (strain ATCC 9150 / SARB42) protein is UDP-2,3-diacylglucosamine hydrolase.